The sequence spans 267 residues: NAD kinase 2 (267 aa).

The active-site Proton acceptor is aspartate 50. Residues 50–51, lysine 55, 122–123, arginine 149, aspartate 151, 162–167, and alanine 186 contribute to the NAD(+) site; these read DG, NE, and TAYNKS.

Belongs to the NAD kinase family. Requires a divalent metal cation as cofactor.

The protein resides in the cytoplasm. The enzyme catalyses NAD(+) + ATP = ADP + NADP(+) + H(+). Its function is as follows. Involved in the regulation of the intracellular balance of NAD and NADP, and is a key enzyme in the biosynthesis of NADP. Catalyzes specifically the phosphorylation on 2'-hydroxyl of the adenosine moiety of NAD to yield NADP. This Listeria monocytogenes serovar 1/2a (strain ATCC BAA-679 / EGD-e) protein is NAD kinase 2.